Consider the following 176-residue polypeptide: Large ribosomal subunit protein bL17 (176 aa).

The disordered stretch occupies residues 124–176 (AAPKAARQDRSKRVKGSRKTEASAAKAAPAAQAAPELPAESDAPAAEAAPTEE). The span at 145–176 (ASAAKAAPAAQAAPELPAESDAPAAEAAPTEE) shows a compositional bias: low complexity.

It belongs to the bacterial ribosomal protein bL17 family. As to quaternary structure, part of the 50S ribosomal subunit. Contacts protein L32.

This Chlorobium phaeovibrioides (strain DSM 265 / 1930) (Prosthecochloris vibrioformis (strain DSM 265)) protein is Large ribosomal subunit protein bL17.